The following is a 125-amino-acid chain: Small ribosomal subunit protein uS12c (125 aa).

The segment at 104 to 125 (ASGVKDRKQGRSKYGGKRPKGD) is disordered. Residues 113-125 (GRSKYGGKRPKGD) are compositionally biased toward basic residues.

This sequence belongs to the universal ribosomal protein uS12 family. As to quaternary structure, part of the 30S ribosomal subunit.

It is found in the plastid. It localises to the chloroplast. With S4 and S5 plays an important role in translational accuracy. Located at the interface of the 30S and 50S subunits. This Emiliania huxleyi (Coccolithophore) protein is Small ribosomal subunit protein uS12c (rps12).